The chain runs to 89 residues: Small ribosomal subunit protein bS20 (89 aa).

Disordered stretches follow at residues 1–25 (MANI…ASMK) and 69–89 (KNAA…IQAS). Basic residues predominate over residues 7-20 (AIKRAKTSEKRRAH).

Belongs to the bacterial ribosomal protein bS20 family.

Its function is as follows. Binds directly to 16S ribosomal RNA. This is Small ribosomal subunit protein bS20 from Geobacillus thermodenitrificans (strain NG80-2).